Consider the following 145-residue polypeptide: Gene 34.1 protein (145 aa).

Functionally, putative excisionase. The polypeptide is Gene 34.1 protein (34.1) (Mycobacterium (Mycobacteriophage D29)).